A 152-amino-acid chain; its full sequence is UPF0178 protein SaurJH9_0705 (152 aa).

The protein belongs to the UPF0178 family.

The polypeptide is UPF0178 protein SaurJH9_0705 (Staphylococcus aureus (strain JH9)).